Reading from the N-terminus, the 616-residue chain is Tumor necrosis factor receptor superfamily member 11A (616 aa).

Positions 1–29 (MAPRARRRRPLFALLLLCALLARLQVALQ) are cleaved as a signal peptide. Topologically, residues 30–212 (IAPPCTSEKH…PPNEPHVYLP (183 aa)) are extracellular. Disulfide bonds link C34–C46, C47–C60, C50–C68, C71–C86, C92–C112, C114–C127, C124–C126, C133–C151, and C154–C169. TNFR-Cys repeat units lie at residues 34-68 (CTSEKHYEHLGRCCNKCEPGKYMSSKCTTTSDSVC), 71-112 (CGPD…PRRC), 114-151 (CTAGYHWSQDCECCRRNTECAPGLGAQHPLQLNKDTVC), and 154-194 (CLAG…DAVC). N-linked (GlcNAc...) asparagine glycosylation is present at N105. Residues C133, A134, and S160 each coordinate Na(+). The N-linked (GlcNAc...) asparagine glycan is linked to N174. Residues C175 and C194 are joined by a disulfide bond. The helical transmembrane segment at 213 to 233 (GLIILLLFASVALVAAIIFGV) threads the bilayer. The Cytoplasmic segment spans residues 234–616 (CYRKKGKALT…PVQEQGGAKA (383 aa)). Residues 468–536 (PLPQCAYGMG…GNSNSTFISS (69 aa)) are disordered. Residues 483–493 (EASRTEARDQP) are compositionally biased toward basic and acidic residues. Residues 499–508 (GRLPSSARAG) show a composition bias toward low complexity. Over residues 524 to 536 (NVTGNSNSTFISS) the composition is skewed to polar residues. Residues 544-549 (GDIIVV) are required for interaction with EEIG1 and osteoclast differentiation. The tract at residues 556-616 (QEGAAAAAEP…PVQEQGGAKA (61 aa)) is disordered. Positions 570-580 (VQEETLARRDS) are enriched in basic and acidic residues. S580 carries the post-translational modification Phosphoserine.

Binds to the clefts between the subunits of the TNFSF11 ligand trimer to form a heterohexamer. Part of a complex composed of EEIG1, TNFRSF11A/RANK, PLCG2, GAB2, TEC and BTK; complex formation increases in the presence of TNFSF11/RANKL. Interacts with TRAF1, TRAF2, TRAF3, TRAF5 and TRAF6. Interacts (via cytoplasmic domain) with GAB2. Interacts (via cytoplasmic domain); with EEIG1 (via N-terminus); when in the presence of TNFSF11/RANKL. As to expression, ubiquitous expression with high levels in skeletal muscle, thymus, liver, colon, small intestine and adrenal gland.

It is found in the cell membrane. It localises to the membrane raft. In terms of biological role, receptor for TNFSF11/RANKL/TRANCE/OPGL; essential for RANKL-mediated osteoclastogenesis. Its interaction with EEIG1 promotes osteoclastogenesis via facilitating the transcription of NFATC1 and activation of PLCG2. Involved in the regulation of interactions between T-cells and dendritic cells. This Homo sapiens (Human) protein is Tumor necrosis factor receptor superfamily member 11A (TNFRSF11A).